The chain runs to 152 residues: UPF0225 protein YchJ (152 aa).

The protein belongs to the UPF0225 family.

This is UPF0225 protein YchJ from Escherichia coli O139:H28 (strain E24377A / ETEC).